Consider the following 498-residue polypeptide: Acetylcholine receptor subunit alpha-type acr-16 (498 aa).

A signal peptide spans 1-19 (MSVCTLLISCAILAAPTLG). Topologically, residues 20-230 (SLQERRLYED…FYLHMRRRTL (211 aa)) are extracellular. Residues Asn-43 and Asn-93 are each glycosylated (N-linked (GlcNAc...) asparagine). 2 disulfides stabilise this stretch: Cys-147–Cys-161 and Cys-211–Cys-212. The next 3 membrane-spanning stretches (helical) occupy residues 231–252 (YYGF…LGFT), 261–279 (ITLQ…SIVS), and 295–314 (FFTC…VYVL). At 315–472 (NLHYRTPETH…WKFAAMVVDR (158 aa)) the chain is on the cytoplasmic side. Residues 473-493 (LCLYVFTIFIIVSTIGIFWSA) form a helical membrane-spanning segment.

The protein belongs to the ligand-gated ion channel (TC 1.A.9) family. Acetylcholine receptor (TC 1.A.9.1) subfamily. As to expression, expressed in the body wall muscle.

It is found in the postsynaptic cell membrane. The protein resides in the cell membrane. In terms of biological role, after binding acetylcholine, the AChR responds by an extensive change in conformation that affects all subunits and leads to opening of an ion-conducting channel across the plasma membrane. A subunit of the levamisole-insensitive nicotinic receptor. The protein is Acetylcholine receptor subunit alpha-type acr-16 (acr-16) of Caenorhabditis elegans.